A 146-amino-acid chain; its full sequence is Transcription initiation factor TFIID subunit 10b (146 aa).

Residues 16–43 form a disordered region; sequence GASSHGQSSGGGGGGDRDRTTPSSHLSD.

The protein belongs to the TAF10 family. As to quaternary structure, belongs to the TFIID complex which is composed of TATA binding protein (Tbp) and a number of TBP-associated factors (TAFs). The N-terminus interacts with the histone fold of Taf8. In terms of tissue distribution, at embryonic stage 9, expression is seen in the mesodermal layer and midgut primordia. The mesoderm-specific expression persists in later stages of development and at its highest level is detected in midgut, hindgut, and differentiating somatic muscle fibers. Coexpressed with Taf10 in the lateral epidermis and anal plate.

It is found in the cytoplasm. The protein localises to the nucleus. Its function is as follows. TFIID is a multimeric protein complex that plays a central role in mediating promoter responses to various activators and repressors. The polypeptide is Transcription initiation factor TFIID subunit 10b (Drosophila melanogaster (Fruit fly)).